A 627-amino-acid polypeptide reads, in one-letter code: Altered inheritance of mitochondria protein 9, mitochondrial (627 aa).

Residues 1 to 43 (MIRYTVAGHSRRCVVGASKRVGAIKCITVAATKRFISNKPNEV) constitute a mitochondrion transit peptide.

This sequence belongs to the AIM9 family.

The protein localises to the mitochondrion. This is Altered inheritance of mitochondria protein 9, mitochondrial (AIM9) from Saccharomyces cerevisiae (strain ATCC 204508 / S288c) (Baker's yeast).